The primary structure comprises 342 residues: Ribosomal RNA small subunit methyltransferase H (342 aa).

S-adenosyl-L-methionine contacts are provided by residues 43–45, Asp61, Phe87, Asp108, and Gln115; that span reads GGY. The segment at 322 to 342 is disordered; sequence ALDEASDGMNLPPLAELEKSR.

Belongs to the methyltransferase superfamily. RsmH family.

The protein resides in the cytoplasm. It carries out the reaction cytidine(1402) in 16S rRNA + S-adenosyl-L-methionine = N(4)-methylcytidine(1402) in 16S rRNA + S-adenosyl-L-homocysteine + H(+). In terms of biological role, specifically methylates the N4 position of cytidine in position 1402 (C1402) of 16S rRNA. This is Ribosomal RNA small subunit methyltransferase H from Hyphomonas neptunium (strain ATCC 15444).